Reading from the N-terminus, the 244-residue chain is 7-cyano-7-deazaguanine synthase (244 aa).

Residue 14 to 24 participates in ATP binding; the sequence is FSGGQDSATCV. Zn(2+) contacts are provided by Cys-202, Cys-217, Cys-220, and Cys-223.

The protein belongs to the QueC family. The cofactor is Zn(2+).

It carries out the reaction 7-carboxy-7-deazaguanine + NH4(+) + ATP = 7-cyano-7-deazaguanine + ADP + phosphate + H2O + H(+). It functions in the pathway purine metabolism; 7-cyano-7-deazaguanine biosynthesis. Catalyzes the ATP-dependent conversion of 7-carboxy-7-deazaguanine (CDG) to 7-cyano-7-deazaguanine (preQ(0)). This is 7-cyano-7-deazaguanine synthase from Burkholderia vietnamiensis (strain G4 / LMG 22486) (Burkholderia cepacia (strain R1808)).